Here is a 240-residue protein sequence, read N- to C-terminus: tRNA pseudouridine synthase B (240 aa).

Asp48 serves as the catalytic Nucleophile.

This sequence belongs to the pseudouridine synthase TruB family. Type 1 subfamily.

The catalysed reaction is uridine(55) in tRNA = pseudouridine(55) in tRNA. In terms of biological role, responsible for synthesis of pseudouridine from uracil-55 in the psi GC loop of transfer RNAs. The chain is tRNA pseudouridine synthase B from Bacteroides thetaiotaomicron (strain ATCC 29148 / DSM 2079 / JCM 5827 / CCUG 10774 / NCTC 10582 / VPI-5482 / E50).